A 268-amino-acid chain; its full sequence is Nickel import ATP-binding protein NikE (268 aa).

The ABC transporter domain maps to 4 to 252 (LNVSDLSHHY…SSDAGRVLQN (249 aa)). 45 to 52 (GRSGCGKS) is a binding site for ATP.

The protein belongs to the ABC transporter superfamily. Nickel importer (TC 3.A.1.5.3) family. As to quaternary structure, the complex is composed of two ATP-binding proteins (NikD and NikE), two transmembrane proteins (NikB and NikC) and a solute-binding protein (NikA).

The protein resides in the cell inner membrane. It catalyses the reaction Ni(2+)(out) + ATP + H2O = Ni(2+)(in) + ADP + phosphate + H(+). Functionally, part of the ABC transporter complex NikABCDE involved in nickel import. Responsible for energy coupling to the transport system. The chain is Nickel import ATP-binding protein NikE from Escherichia coli O6:K15:H31 (strain 536 / UPEC).